The primary structure comprises 218 residues: N-(5'-phosphoribosyl)anthranilate isomerase (218 aa).

Belongs to the TrpF family.

It catalyses the reaction N-(5-phospho-beta-D-ribosyl)anthranilate = 1-(2-carboxyphenylamino)-1-deoxy-D-ribulose 5-phosphate. It participates in amino-acid biosynthesis; L-tryptophan biosynthesis; L-tryptophan from chorismate: step 3/5. The protein is N-(5'-phosphoribosyl)anthranilate isomerase of Stenotrophomonas maltophilia (strain K279a).